Reading from the N-terminus, the 211-residue chain is ATP phosphoribosyltransferase (211 aa).

This sequence belongs to the ATP phosphoribosyltransferase family. Short subfamily. In terms of assembly, heteromultimer composed of HisG and HisZ subunits.

Its subcellular location is the cytoplasm. It catalyses the reaction 1-(5-phospho-beta-D-ribosyl)-ATP + diphosphate = 5-phospho-alpha-D-ribose 1-diphosphate + ATP. The protein operates within amino-acid biosynthesis; L-histidine biosynthesis; L-histidine from 5-phospho-alpha-D-ribose 1-diphosphate: step 1/9. Its function is as follows. Catalyzes the condensation of ATP and 5-phosphoribose 1-diphosphate to form N'-(5'-phosphoribosyl)-ATP (PR-ATP). Has a crucial role in the pathway because the rate of histidine biosynthesis seems to be controlled primarily by regulation of HisG enzymatic activity. The polypeptide is ATP phosphoribosyltransferase (Pseudomonas putida (strain GB-1)).